The following is a 163-amino-acid chain: Phosphopantetheine adenylyltransferase (163 aa).

Threonine 11 is a binding site for substrate. ATP is bound by residues 11-12 (TF) and histidine 19. Residues lysine 43, leucine 75, and arginine 89 each coordinate substrate. ATP is bound by residues 90-92 (GLR), glutamate 100, and 125-131 (YSFISST).

The protein belongs to the bacterial CoaD family. In terms of assembly, homohexamer. The cofactor is Mg(2+).

It localises to the cytoplasm. The enzyme catalyses (R)-4'-phosphopantetheine + ATP + H(+) = 3'-dephospho-CoA + diphosphate. The protein operates within cofactor biosynthesis; coenzyme A biosynthesis; CoA from (R)-pantothenate: step 4/5. Reversibly transfers an adenylyl group from ATP to 4'-phosphopantetheine, yielding dephospho-CoA (dPCoA) and pyrophosphate. The polypeptide is Phosphopantetheine adenylyltransferase (Acinetobacter baumannii (strain ACICU)).